The sequence spans 29 residues: Augerpeptide hheTx2 (29 aa).

Contains 4 disulfide bonds. Expressed by the venom duct.

Its subcellular location is the secreted. The polypeptide is Augerpeptide hheTx2 (Hastula hectica (Sea snail)).